Here is a 367-residue protein sequence, read N- to C-terminus: 15-cis-zeta-carotene isomerase, chloroplastic (367 aa).

The transit peptide at 1-58 directs the protein to the chloroplast; the sequence is MAVYHLLLSSPPSLLLLPPSPRRPNLTLIRRIPAHPRLGNSTSLLSSSSPVIRKILVR. The next 6 membrane-spanning stretches (helical) occupy residues 95-115, 137-157, 172-192, 211-231, 269-289, and 339-359; these read SWVY…VVWI, EVAM…LASL, VLFA…FINH, AIWV…FNLL, LWIG…HHLF, and LPYL…PLMQ.

In terms of tissue distribution, expressed in leaves and at lower levels in roots.

The protein resides in the plastid. Its subcellular location is the chloroplast membrane. The enzyme catalyses 9,9',15-tri-cis-zeta-carotene = 9,9'-di-cis-zeta-carotene. Its function is as follows. Isomerase involved in the biosynthesis of carotenoids. Catalyzes the cis- to trans-conversion of the 15-cis-bond in 9,15,9'-tri-cis-zeta-carotene. The protein is 15-cis-zeta-carotene isomerase, chloroplastic (Z-ISO) of Arabidopsis thaliana (Mouse-ear cress).